A 62-amino-acid polypeptide reads, in one-letter code: uncharacterized protein (62 aa).

Belongs to the asfivirus C62L family.

This is an uncharacterized protein from African swine fever virus (strain Badajoz 1971 Vero-adapted) (Ba71V).